The primary structure comprises 183 residues: ATP-dependent protease subunit HslV (183 aa).

Thr2 is an active-site residue. Na(+) is bound by residues Ala157, Cys160, and Thr163.

The protein belongs to the peptidase T1B family. HslV subfamily. As to quaternary structure, a double ring-shaped homohexamer of HslV is capped on each side by a ring-shaped HslU homohexamer. The assembly of the HslU/HslV complex is dependent on binding of ATP.

The protein localises to the cytoplasm. The enzyme catalyses ATP-dependent cleavage of peptide bonds with broad specificity.. Allosterically activated by HslU binding. Its function is as follows. Protease subunit of a proteasome-like degradation complex believed to be a general protein degrading machinery. In Marinomonas sp. (strain MWYL1), this protein is ATP-dependent protease subunit HslV.